Consider the following 571-residue polypeptide: Zinc metalloproteinase nas-15 (571 aa).

The signal sequence occupies residues 1-15 (MREYVLIFLVAPVFA). N-linked (GlcNAc...) asparagine glycosylation is present at asparagine 92. The region spanning 114 to 307 (NAIKNRLQLW…FKINTLYGCP (194 aa)) is the Peptidase M12A domain. 5 disulfide bridges follow: cysteine 156–cysteine 306, cysteine 178–cysteine 197, cysteine 354–cysteine 388, cysteine 361–cysteine 381, and cysteine 370–cysteine 385. Histidine 205 lines the Zn(2+) pocket. Glutamate 206 is a catalytic residue. 2 residues coordinate Zn(2+): histidine 209 and histidine 215. Residues 354–388 (CRNLRGDCDDLAKQGWCIRNPGWMRANCPISCGMC) form the ShKT 1 domain. The span at 407–420 (TTTARPQKPVTQPI) shows a compositional bias: low complexity. The interval 407-426 (TTTARPQKPVTQPIQPLPPV) is disordered. Cystine bridges form between cysteine 437-cysteine 471, cysteine 444-cysteine 464, and cysteine 453-cysteine 468. The 35-residue stretch at 437–471 (CEDLRVDCLVLVSQRYCKISQNFMKSYCAKSCGFC) folds into the ShKT 2 domain. The interval 500 to 530 (IRSRSPAPPVSTTTKAAPTTSTTSAAPYSPT) is disordered. Positions 509–527 (VSTTTKAAPTTSTTSAAPY) are enriched in low complexity. Disulfide bonds link cysteine 536-cysteine 571, cysteine 543-cysteine 564, and cysteine 552-cysteine 568. The region spanning 536 to 571 (CSDRKHFCSHWKSAGFCEGIFMNYMKKNCPASCGLC) is the ShKT 3 domain.

It depends on Zn(2+) as a cofactor. As to expression, expressed in pharyngeal marginal cells and muscles.

Its subcellular location is the secreted. Functionally, metalloprotease. The polypeptide is Zinc metalloproteinase nas-15 (nas-15) (Caenorhabditis elegans).